Here is a 372-residue protein sequence, read N- to C-terminus: MKQQLVFEAPRRAMPPQHLADLDETARAAAVTELGLPAFRAKQLANQYYGRLIADPQQMTDLPAAVRDQVAEKLFPTLINPVREIQCDAGETRKTLWRAIDGSTFESVLMRYPQRNTVCISSQAGCGMACPFCATGQGGLQRNLTTAEILEQVRAASSTMRAEHFGRTAGTAGGGRLSNIVFMGMGEPLANYNRVLGAVRRIIAAPPNGFGISARSVTVSTVGLAPAIRKLADERLGVTLALSLHAPDDELRDTLVPVNNRWKVSEVLDAARYYADTTGRRVSIEYALIRDVNDQPWRADLLGKKLHGALGPLAHVNVIPLNPTPGSEWDASPKPAEREFVKRVRERGVSCTVRDTRGREIAAACGQLAAEG.

E106 (proton acceptor) is an active-site residue. One can recognise a Radical SAM core domain in the interval 112–359; that stretch reads YPQRNTVCIS…SCTVRDTRGR (248 aa). An intrachain disulfide couples C119 to C365. Residues C126, C130, and C133 each contribute to the [4Fe-4S] cluster site. S-adenosyl-L-methionine contacts are provided by residues 186-187, S220, 243-245, and N322; these read GE and SLH. C365 functions as the S-methylcysteine intermediate in the catalytic mechanism.

Belongs to the radical SAM superfamily. RlmN family. It depends on [4Fe-4S] cluster as a cofactor.

Its subcellular location is the cytoplasm. It catalyses the reaction adenosine(2503) in 23S rRNA + 2 reduced [2Fe-2S]-[ferredoxin] + 2 S-adenosyl-L-methionine = 2-methyladenosine(2503) in 23S rRNA + 5'-deoxyadenosine + L-methionine + 2 oxidized [2Fe-2S]-[ferredoxin] + S-adenosyl-L-homocysteine. It carries out the reaction adenosine(37) in tRNA + 2 reduced [2Fe-2S]-[ferredoxin] + 2 S-adenosyl-L-methionine = 2-methyladenosine(37) in tRNA + 5'-deoxyadenosine + L-methionine + 2 oxidized [2Fe-2S]-[ferredoxin] + S-adenosyl-L-homocysteine. Its function is as follows. Specifically methylates position 2 of adenine 2503 in 23S rRNA and position 2 of adenine 37 in tRNAs. This is Probable dual-specificity RNA methyltransferase RlmN from Mycolicibacterium smegmatis (strain ATCC 700084 / mc(2)155) (Mycobacterium smegmatis).